The sequence spans 261 residues: Cytochrome c oxidase subunit 3 (261 aa).

The Mitochondrial matrix segment spans residues 1–15; sequence MTHQTHAYHMVNPSP. A helical membrane pass occupies residues 16–34; that stretch reads WPLTGALSALLMTSGLIMW. Residues 35–40 are Mitochondrial intermembrane-facing; the sequence is FHFNST. The helical transmembrane segment at 41 to 66 threads the bilayer; it reads TLLMLGLTTNMLTMYQWWRDIIREST. Topologically, residues 67–72 are mitochondrial matrix; it reads FQGHHT. A helical membrane pass occupies residues 73–105; the sequence is PSVQKGLRYGMILFIISEVLFFTGFFWAFYHSS. Residues 106–128 lie on the Mitochondrial intermembrane side of the membrane; sequence LAPTPELGGCWPPTGIHPLNPLE. Residues 129-152 form a helical membrane-spanning segment; the sequence is VPLLNTSVLLASGVSITWAHHSLM. Topologically, residues 153–155 are mitochondrial matrix; that stretch reads EGN. The helical transmembrane segment at 156–183 threads the bilayer; the sequence is RNHMLQALFITIALGVYFTLLQASEYYE. Residues 184 to 190 lie on the Mitochondrial intermembrane side of the membrane; the sequence is APFTISD. The helical transmembrane segment at 191–223 threads the bilayer; it reads GVYGSTFFVATGFHGLHVIIGSTFLIVCFFRQL. Residues 224–232 are Mitochondrial matrix-facing; it reads KFHFTSNHH. Residues 233–256 traverse the membrane as a helical segment; sequence FGFEAAAWYWHFVDVVWLFLYVSI. Residues 257–261 lie on the Mitochondrial intermembrane side of the membrane; that stretch reads YWWGS.

It belongs to the cytochrome c oxidase subunit 3 family. As to quaternary structure, component of the cytochrome c oxidase (complex IV, CIV), a multisubunit enzyme composed of 14 subunits. The complex is composed of a catalytic core of 3 subunits MT-CO1, MT-CO2 and MT-CO3, encoded in the mitochondrial DNA, and 11 supernumerary subunits COX4I, COX5A, COX5B, COX6A, COX6B, COX6C, COX7A, COX7B, COX7C, COX8 and NDUFA4, which are encoded in the nuclear genome. The complex exists as a monomer or a dimer and forms supercomplexes (SCs) in the inner mitochondrial membrane with NADH-ubiquinone oxidoreductase (complex I, CI) and ubiquinol-cytochrome c oxidoreductase (cytochrome b-c1 complex, complex III, CIII), resulting in different assemblies (supercomplex SCI(1)III(2)IV(1) and megacomplex MCI(2)III(2)IV(2)).

It is found in the mitochondrion inner membrane. The enzyme catalyses 4 Fe(II)-[cytochrome c] + O2 + 8 H(+)(in) = 4 Fe(III)-[cytochrome c] + 2 H2O + 4 H(+)(out). Functionally, component of the cytochrome c oxidase, the last enzyme in the mitochondrial electron transport chain which drives oxidative phosphorylation. The respiratory chain contains 3 multisubunit complexes succinate dehydrogenase (complex II, CII), ubiquinol-cytochrome c oxidoreductase (cytochrome b-c1 complex, complex III, CIII) and cytochrome c oxidase (complex IV, CIV), that cooperate to transfer electrons derived from NADH and succinate to molecular oxygen, creating an electrochemical gradient over the inner membrane that drives transmembrane transport and the ATP synthase. Cytochrome c oxidase is the component of the respiratory chain that catalyzes the reduction of oxygen to water. Electrons originating from reduced cytochrome c in the intermembrane space (IMS) are transferred via the dinuclear copper A center (CU(A)) of subunit 2 and heme A of subunit 1 to the active site in subunit 1, a binuclear center (BNC) formed by heme A3 and copper B (CU(B)). The BNC reduces molecular oxygen to 2 water molecules using 4 electrons from cytochrome c in the IMS and 4 protons from the mitochondrial matrix. This chain is Cytochrome c oxidase subunit 3 (MT-CO3), found in Pelea capreolus (Gray rhebok).